The chain runs to 633 residues: MKRLGLAALYIGSALAWPEPHGPPSRNVPRDDFPMFNPLPSTDLNTRLIRCEYPSMKGWTYSNKKNGDWLKYVGSKPGEITEYNIDTDNDKYVPQGITRKYHLEVTDESVNMDGTMFDQAKVFNKQYPGPWIQITVTNKLKHNGTAIHWHGIRMMENMFNDGVPGVTQCPIPPGSSMTYRFKASQYGSSWYHSHYSLQYADGLFGPMTIHGPTSAGYDKAVDPLLMTDHLHSSAFEEYHKELEGKPPAMDSIILNGKGDYDQTGDLKKKYRTVLKPGKKYLLRLINTSVATTFVFSIDGHKFQVVGSDFVPIEPYVTDHIAVGIGQRYHVILEGLSEEEAKKNGRYWVRTTPAKGCSKFAPGRGTDDRTGVIYYNKDDGVSPTTEIGAFSLDCRDEPLEKLVPKVKWTVPDPGLNMVGAFEKPADVQLGKWHRPGYPDTDNLVSNWEFGPSPMWINYSEPIIKNLDKDSFPSTWVVYPADDYVNDKWVYLVITGKKLKPLSSQVAVAHPIHLHGHDFVLLQQSMEPWDSTEVNLKLDNPPRREVTLLPAGGFIVIAFKPDNPGSWLLHCHIAWHASAGLALQVLERKEDLKALTLNNPDFDFMQENCRKWDAWHSDKTNYWNPSGHFQDDSGV.

Positions 1–16 (MKRLGLAALYIGSALA) are cleaved as a signal peptide. Residues 22 to 47 (GPPSRNVPRDDFPMFNPLPSTDLNTR) constitute a propeptide that is removed on maturation. N-linked (GlcNAc...) asparagine glycosylation is present at asparagine 143. Cu cation contacts are provided by histidine 148, histidine 150, histidine 192, and histidine 194. Cysteines 169 and 607 form a disulfide. A Plastocyanin-like domain is found at 224-353 (LLMTDHLHSS…GRYWVRTTPA (130 aa)). N-linked (GlcNAc...) asparagine glycosylation is found at asparagine 286 and asparagine 456. Residues histidine 508, histidine 511, histidine 513, histidine 568, cysteine 569, histidine 570, and histidine 574 each contribute to the Cu cation site.

The protein belongs to the multicopper oxidase family. In terms of assembly, monomer. It depends on Cu cation as a cofactor.

The protein resides in the secreted. It catalyses the reaction 4 hydroquinone + O2 = 4 benzosemiquinone + 2 H2O. This is Laccase ARB_05828 from Arthroderma benhamiae (strain ATCC MYA-4681 / CBS 112371) (Trichophyton mentagrophytes).